The primary structure comprises 345 residues: UDP-N-acetylenolpyruvoylglucosamine reductase (345 aa).

The FAD-binding PCMH-type domain occupies 25 to 193 (LPAHCTDFVS…VGVTFLLPKA (169 aa)). Arg169 is a catalytic residue. Ser237 functions as the Proton donor in the catalytic mechanism. The active site involves Glu333.

The protein belongs to the MurB family. FAD serves as cofactor.

Its subcellular location is the cytoplasm. The enzyme catalyses UDP-N-acetyl-alpha-D-muramate + NADP(+) = UDP-N-acetyl-3-O-(1-carboxyvinyl)-alpha-D-glucosamine + NADPH + H(+). It functions in the pathway cell wall biogenesis; peptidoglycan biosynthesis. In terms of biological role, cell wall formation. The protein is UDP-N-acetylenolpyruvoylglucosamine reductase of Pseudoalteromonas atlantica (strain T6c / ATCC BAA-1087).